Consider the following 320-residue polypeptide: Protein TsetseEP (320 aa).

The first 19 residues, 1 to 19 (MKFFISFAFLCLVLSCVAA), serve as a signal peptide directing secretion. A disordered region spans residues 192 to 320 (GLPEPEPEPE…ESKPNSLFNF (129 aa)). Residues 194–308 (PEPEPEPEPE…EPEPEPEPQP (115 aa)) show a composition bias toward acidic residues. The segment at 194 to 311 (PEPEPEPEPE…PEPEPQPEPE (118 aa)) is 59 X 2 AA tandem repeats of P-E.

As to expression, expressed in the gut, but not salivary glands, of female and male flies (at protein level). Present in vesicles in midgut cells and in the lumen of the gut.

It is found in the secreted. In Glossina morsitans morsitans (Savannah tsetse fly), this protein is Protein TsetseEP.